Here is a 587-residue protein sequence, read N- to C-terminus: Aspartate--tRNA ligase (587 aa).

Glutamate 173 contacts L-aspartate. The segment at glutamine 197–lysine 200 is aspartate. Arginine 219 contacts L-aspartate. ATP contacts are provided by residues arginine 219–glutamate 221 and glutamine 228. Histidine 446 serves as a coordination point for L-aspartate. Glutamate 480 is a binding site for ATP. Arginine 487 is a binding site for L-aspartate. Glycine 532 to arginine 535 contributes to the ATP binding site.

This sequence belongs to the class-II aminoacyl-tRNA synthetase family. Type 1 subfamily. Homodimer.

It localises to the cytoplasm. The enzyme catalyses tRNA(Asp) + L-aspartate + ATP = L-aspartyl-tRNA(Asp) + AMP + diphosphate. In terms of biological role, catalyzes the attachment of L-aspartate to tRNA(Asp) in a two-step reaction: L-aspartate is first activated by ATP to form Asp-AMP and then transferred to the acceptor end of tRNA(Asp). This is Aspartate--tRNA ligase from Phocaeicola vulgatus (strain ATCC 8482 / DSM 1447 / JCM 5826 / CCUG 4940 / NBRC 14291 / NCTC 11154) (Bacteroides vulgatus).